The sequence spans 264 residues: Thiazole synthase (264 aa).

K98 (schiff-base intermediate with DXP) is an active-site residue. Residues G159, 185–186, and 207–208 contribute to the 1-deoxy-D-xylulose 5-phosphate site; these read AG and AS. Residues 243–264 are disordered; that stretch reads HFAEASSPPEGRAHLDPERPAF. The span at 253–264 shows a compositional bias: basic and acidic residues; that stretch reads GRAHLDPERPAF.

This sequence belongs to the ThiG family. In terms of assembly, homotetramer. Forms heterodimers with either ThiH or ThiS.

Its subcellular location is the cytoplasm. It carries out the reaction [ThiS sulfur-carrier protein]-C-terminal-Gly-aminoethanethioate + 2-iminoacetate + 1-deoxy-D-xylulose 5-phosphate = [ThiS sulfur-carrier protein]-C-terminal Gly-Gly + 2-[(2R,5Z)-2-carboxy-4-methylthiazol-5(2H)-ylidene]ethyl phosphate + 2 H2O + H(+). Its pathway is cofactor biosynthesis; thiamine diphosphate biosynthesis. In terms of biological role, catalyzes the rearrangement of 1-deoxy-D-xylulose 5-phosphate (DXP) to produce the thiazole phosphate moiety of thiamine. Sulfur is provided by the thiocarboxylate moiety of the carrier protein ThiS. In vitro, sulfur can be provided by H(2)S. In Streptomyces avermitilis (strain ATCC 31267 / DSM 46492 / JCM 5070 / NBRC 14893 / NCIMB 12804 / NRRL 8165 / MA-4680), this protein is Thiazole synthase.